Consider the following 142-residue polypeptide: Large ribosomal subunit protein uL16 (142 aa).

Basic residues predominate over residues 1–14 (MLSPRRTKFRKQQR). The disordered stretch occupies residues 1–22 (MLSPRRTKFRKQQRGRMTGKAT).

This sequence belongs to the universal ribosomal protein uL16 family. In terms of assembly, part of the 50S ribosomal subunit.

Its function is as follows. Binds 23S rRNA and is also seen to make contacts with the A and possibly P site tRNAs. The chain is Large ribosomal subunit protein uL16 from Synechococcus elongatus (strain ATCC 33912 / PCC 7942 / FACHB-805) (Anacystis nidulans R2).